Consider the following 514-residue polypeptide: Membrane-bound lytic murein transglycosylase F (514 aa).

An N-terminal signal peptide occupies residues 1–30 (MKKLKINYLFIGILTLLLAAALWPSIPWFG). A non-LT domain region spans residues 31–269 (KTENHIAAIQ…RIEEKYLGHG (239 aa)). Positions 270–514 (DDFDYVDTRS…LFTPQKKEEK (245 aa)) are LT domain. Glu-314 is a catalytic residue.

It in the N-terminal section; belongs to the bacterial solute-binding protein 3 family. This sequence in the C-terminal section; belongs to the transglycosylase Slt family.

It is found in the cell outer membrane. The catalysed reaction is Exolytic cleavage of the (1-&gt;4)-beta-glycosidic linkage between N-acetylmuramic acid (MurNAc) and N-acetylglucosamine (GlcNAc) residues in peptidoglycan, from either the reducing or the non-reducing ends of the peptidoglycan chains, with concomitant formation of a 1,6-anhydrobond in the MurNAc residue.. In terms of biological role, murein-degrading enzyme that degrades murein glycan strands and insoluble, high-molecular weight murein sacculi, with the concomitant formation of a 1,6-anhydromuramoyl product. Lytic transglycosylases (LTs) play an integral role in the metabolism of the peptidoglycan (PG) sacculus. Their lytic action creates space within the PG sacculus to allow for its expansion as well as for the insertion of various structures such as secretion systems and flagella. This chain is Membrane-bound lytic murein transglycosylase F, found in Salmonella paratyphi B (strain ATCC BAA-1250 / SPB7).